The primary structure comprises 338 residues: Glycerol-3-phosphate dehydrogenase [NAD(P)+] (338 aa).

The NADPH site is built by serine 13, tryptophan 14, and lysine 108. 3 residues coordinate sn-glycerol 3-phosphate: lysine 108, glycine 139, and serine 141. Alanine 143 provides a ligand contact to NADPH. Residues lysine 194, aspartate 247, serine 257, arginine 258, and asparagine 259 each contribute to the sn-glycerol 3-phosphate site. Lysine 194 serves as the catalytic Proton acceptor. Arginine 258 serves as a coordination point for NADPH. 2 residues coordinate NADPH: valine 282 and glutamate 284.

Belongs to the NAD-dependent glycerol-3-phosphate dehydrogenase family.

It is found in the cytoplasm. It catalyses the reaction sn-glycerol 3-phosphate + NAD(+) = dihydroxyacetone phosphate + NADH + H(+). The catalysed reaction is sn-glycerol 3-phosphate + NADP(+) = dihydroxyacetone phosphate + NADPH + H(+). It functions in the pathway membrane lipid metabolism; glycerophospholipid metabolism. In terms of biological role, catalyzes the reduction of the glycolytic intermediate dihydroxyacetone phosphate (DHAP) to sn-glycerol 3-phosphate (G3P), the key precursor for phospholipid synthesis. This is Glycerol-3-phosphate dehydrogenase [NAD(P)+] from Streptococcus pneumoniae serotype 19F (strain G54).